The primary structure comprises 404 residues: Tryptophan synthase beta chain (404 aa).

Lys-94 carries the post-translational modification N6-(pyridoxal phosphate)lysine.

The protein belongs to the TrpB family. As to quaternary structure, tetramer of two alpha and two beta chains. Pyridoxal 5'-phosphate serves as cofactor.

It carries out the reaction (1S,2R)-1-C-(indol-3-yl)glycerol 3-phosphate + L-serine = D-glyceraldehyde 3-phosphate + L-tryptophan + H2O. Its pathway is amino-acid biosynthesis; L-tryptophan biosynthesis; L-tryptophan from chorismate: step 5/5. Functionally, the beta subunit is responsible for the synthesis of L-tryptophan from indole and L-serine. The protein is Tryptophan synthase beta chain of Staphylococcus aureus (strain bovine RF122 / ET3-1).